The sequence spans 681 residues: Type VI secretion system spike protein VgrG1 (681 aa).

The segment at Asn621–Pro640 is disordered.

This sequence belongs to the VgrG protein family.

Its subcellular location is the secreted. The catalysed reaction is L-arginyl-[protein] + NAD(+) = N(omega)-(ADP-D-ribosyl)-L-arginyl-[protein] + nicotinamide + H(+). Its function is as follows. Part of the type VI secretion system specialized secretion system, which delivers several virulence factors in both prokaryotic and eukaryotic cells during infection. Acts directly as an secreted effector with an actin ADP-ribosyltransferase activity that disrupts the host actin cytoskeleton, leading to a decrease in host cell viability and an increase in apoptosis. The protein is Type VI secretion system spike protein VgrG1 (vgrG1) of Aeromonas hydrophila.